The primary structure comprises 106 residues: uncharacterized protein (106 aa).

Disordered regions lie at residues 27-47 (FSDSEDEPDDEASSSDKDVSD) and 83-106 (SPAMLPRPAYRGIEREDRGGVQSK). Over residues 29–39 (DSEDEPDDEAS) the composition is skewed to acidic residues. Residues 94–106 (GIEREDRGGVQSK) show a composition bias toward basic and acidic residues.

Its subcellular location is the mitochondrion. This is an uncharacterized protein from Arabidopsis thaliana (Mouse-ear cress).